Reading from the N-terminus, the 170-residue chain is Protein ECM34 (170 aa).

The N-linked (GlcNAc...) asparagine glycan is linked to asparagine 45. 2 helical membrane passes run 51-71 and 98-118; these read IWLLLCLTLIVGWKVFSGIGG and TIVILVISLAVSFSWEAFKMY.

This sequence belongs to the DUP/COS family.

It is found in the membrane. Its function is as follows. May be involved in cell wall organization and biogenesis. This chain is Protein ECM34 (ECM34), found in Saccharomyces cerevisiae (strain ATCC 204508 / S288c) (Baker's yeast).